Consider the following 271-residue polypeptide: 5'-AMP-activated protein kinase subunit beta-2 (271 aa).

Residues 1–47 (MGNTTSERVSGERHGAKAARAEGGGHGPGKEHKIMVGSTDDPSVFSL) form a disordered region. Ser-38 bears the Phosphoserine; by ULK1 mark. Thr-39 carries the phosphothreonine; by ULK1 modification. Residue Ser-68 is modified to Phosphoserine; by ULK1. 2 positions are modified to phosphoserine: Ser-94 and Ser-107. Phosphothreonine is present on Thr-147. Residues Ser-157 and Ser-169 each carry the phosphoserine modification. Ser-173 is subject to Phosphoserine; by ULK1. The residue at position 183 (Ser-183) is a Phosphoserine.

Belongs to the 5'-AMP-activated protein kinase beta subunit family. As to quaternary structure, AMPK is a heterotrimer of an alpha catalytic subunit (PRKAA1 or PRKAA2), a beta (PRKAB1 or PRKAB2) and a gamma non-catalytic subunits (PRKAG1, PRKAG2 or PRKAG3). In terms of processing, phosphorylated when associated with the catalytic subunit (PRKAA1 or PRKAA2). Phosphorylated by ULK1 and ULK2; leading to negatively regulate AMPK activity and suggesting the existence of a regulatory feedback loop between ULK1, ULK2 and AMPK.

Non-catalytic subunit of AMP-activated protein kinase (AMPK), an energy sensor protein kinase that plays a key role in regulating cellular energy metabolism. In response to reduction of intracellular ATP levels, AMPK activates energy-producing pathways and inhibits energy-consuming processes: inhibits protein, carbohydrate and lipid biosynthesis, as well as cell growth and proliferation. AMPK acts via direct phosphorylation of metabolic enzymes, and by longer-term effects via phosphorylation of transcription regulators. Also acts as a regulator of cellular polarity by remodeling the actin cytoskeleton; probably by indirectly activating myosin. Beta non-catalytic subunit acts as a scaffold on which the AMPK complex assembles, via its C-terminus that bridges alpha (PRKAA1 or PRKAA2) and gamma subunits (PRKAG1, PRKAG2 or PRKAG3). This chain is 5'-AMP-activated protein kinase subunit beta-2 (Prkab2), found in Rattus norvegicus (Rat).